The sequence spans 89 residues: Aminoacyl carrier protein 2 (89 aa).

The region spanning 6-84 is the Carrier domain; that stretch reads INVQNRVLSV…AMERMILNQL (79 aa). Serine 42 carries the post-translational modification O-(pantetheine 4'-phosphoryl)serine.

4'-phosphopantetheine is transferred from CoA to a specific serine of the apo-form of this carrier protein.

In terms of biological role, aminoacyl carrier protein. Can be charged with L-glycine via the formation of a thioester bond between the amino acid and the 4'-phosphopantetheinyl prosthetic group, catalyzed by the bll6282 ligase. The chain is Aminoacyl carrier protein 2 from Bradyrhizobium diazoefficiens (strain JCM 10833 / BCRC 13528 / IAM 13628 / NBRC 14792 / USDA 110).